Consider the following 237-residue polypeptide: Cuticlin-like protein 19 (237 aa).

An N-terminal signal peptide occupies residues 1 to 20; it reads MVEYNRIFCVLVIFSTTIKC.

In terms of assembly, interacts with vps-51 and vps-52. As to expression, expression detected in motor neurons.

It is found in the golgi apparatus. The protein resides in the trans-Golgi network. The polypeptide is Cuticlin-like protein 19 (cutl-19) (Caenorhabditis elegans).